Consider the following 899-residue polypeptide: Lipoxygenase 2, chloroplastic (899 aa).

The N-terminal 57 residues, 1–57 (MLKPQIHKPHLVNKLPLGTPFIPSHASIASFSTTSLRTLSVQKCYRRYIRYTSSNIK), are a transit peptide targeting the chloroplast. In terms of domain architecture, PLAT spans 83 to 203 (ALTAVTVGLL…DNPDKRIFFL (121 aa)). Residues 206 to 899 (SYLPSETPEG…GKGVPYSISI (694 aa)) enclose the Lipoxygenase domain. A disordered region spans residues 252–286 (DPDTDSDMARPVLGGNEHPFPRRCRTGRKMTSTEP). 5 residues coordinate Fe cation: His-557, His-562, His-749, Asn-753, and Ile-899.

This sequence belongs to the lipoxygenase family. The cofactor is Fe cation. As to expression, confined to glandular trichomes in flowers.

The protein localises to the plastid. It is found in the chloroplast. Its pathway is lipid metabolism; oxylipin biosynthesis. Plant lipoxygenases may be involved in a number of diverse aspects of plant physiology including growth and development, pest resistance, and senescence or responses to wounding. Catalyzes the hydroperoxidation of lipids containing a cis,cis-1,4-pentadiene structure. The protein is Lipoxygenase 2, chloroplastic of Tanacetum cinerariifolium (Dalmatian daisy).